A 433-amino-acid chain; its full sequence is Trigger factor (433 aa).

One can recognise a PPIase FKBP-type domain in the interval 161 to 246 (EDRVVIDFVG…LKKVENIVLP (86 aa)).

The protein belongs to the FKBP-type PPIase family. Tig subfamily.

It localises to the cytoplasm. It carries out the reaction [protein]-peptidylproline (omega=180) = [protein]-peptidylproline (omega=0). Functionally, involved in protein export. Acts as a chaperone by maintaining the newly synthesized protein in an open conformation. Functions as a peptidyl-prolyl cis-trans isomerase. The polypeptide is Trigger factor (Actinobacillus pleuropneumoniae serotype 7 (strain AP76)).